A 685-amino-acid polypeptide reads, in one-letter code: Bifunctional lycopene cyclase/phytoene synthase (685 aa).

The segment at 15 to 255 (TLSYRHFHLL…LVSACFTFDR (241 aa)) is lycopene beta-cyclase. A run of 7 helical transmembrane segments spans residues 21–41 (FHLL…RPFL), 48–68 (KLIL…NLIV), 92–114 (YFFF…RWAL), 129–149 (LATP…KAAV), 156–176 (YFGM…WGSV), 187–207 (GLAP…ASDV), and 231–251 (LPIE…SACF). A phytoene synthase region spans residues 262-685 (QSVAENAPPL…RAVSAVYFGV (424 aa)).

This sequence in the N-terminal section; belongs to the lycopene beta-cyclase family. It in the C-terminal section; belongs to the phytoene/squalene synthase family.

It is found in the membrane. It carries out the reaction all-trans-lycopene = gamma-carotene. It catalyses the reaction gamma-carotene = all-trans-beta-carotene. The enzyme catalyses 2 (2E,6E,10E)-geranylgeranyl diphosphate = 15-cis-phytoene + 2 diphosphate. It participates in carotenoid biosynthesis; beta-carotene biosynthesis. It functions in the pathway carotenoid biosynthesis; phytoene biosynthesis; all-trans-phytoene from geranylgeranyl diphosphate: step 1/1. Its function is as follows. Bifunctional enzyme that catalyzes the reactions from geranylgeranyl diphosphate to phytoene (phytoene synthase) and lycopene to beta-carotene via the intermediate gamma-carotene (lycopene cyclase). In Sporisorium reilianum (strain SRZ2) (Maize head smut fungus), this protein is Bifunctional lycopene cyclase/phytoene synthase.